Here is a 397-residue protein sequence, read N- to C-terminus: Acetate kinase (397 aa).

Asn7 contacts Mg(2+). Residue Lys14 coordinates ATP. Position 90 (Arg90) interacts with substrate. Asp147 acts as the Proton donor/acceptor in catalysis. ATP-binding positions include 207–211, 282–284, and 330–334; these read HLGNG, DFR, and GLGEN. Position 383 (Glu383) interacts with Mg(2+).

It belongs to the acetokinase family. In terms of assembly, homodimer. Mg(2+) serves as cofactor. The cofactor is Mn(2+).

It localises to the cytoplasm. The enzyme catalyses acetate + ATP = acetyl phosphate + ADP. It participates in metabolic intermediate biosynthesis; acetyl-CoA biosynthesis; acetyl-CoA from acetate: step 1/2. Functionally, catalyzes the formation of acetyl phosphate from acetate and ATP. Can also catalyze the reverse reaction. The chain is Acetate kinase from Clostridium botulinum (strain 657 / Type Ba4).